The following is a 104-amino-acid chain: Large ribosomal subunit protein uL24 (104 aa).

Basic and acidic residues predominate over residues 82–92; the sequence is RIGYRTDENGK. A disordered region spans residues 82-104; sequence RIGYRTDENGKRVRISRRNGKDI. Over residues 93–104 the composition is skewed to basic residues; the sequence is RVRISRRNGKDI.

It belongs to the universal ribosomal protein uL24 family. Part of the 50S ribosomal subunit.

One of two assembly initiator proteins, it binds directly to the 5'-end of the 23S rRNA, where it nucleates assembly of the 50S subunit. Its function is as follows. One of the proteins that surrounds the polypeptide exit tunnel on the outside of the subunit. The sequence is that of Large ribosomal subunit protein uL24 from Nocardia farcinica (strain IFM 10152).